Reading from the N-terminus, the 177-residue chain is Bifunctional protein PyrR (177 aa).

A PRPP-binding motif is present at residues 99–111 (LVLIDDVIYKGRT).

It belongs to the purine/pyrimidine phosphoribosyltransferase family. PyrR subfamily.

The catalysed reaction is UMP + diphosphate = 5-phospho-alpha-D-ribose 1-diphosphate + uracil. Its function is as follows. Regulates the transcription of the pyrimidine nucleotide (pyr) operon in response to exogenous pyrimidines. Also displays a weak uracil phosphoribosyltransferase activity which is not physiologically significant. This Picosynechococcus sp. (strain ATCC 27264 / PCC 7002 / PR-6) (Agmenellum quadruplicatum) protein is Bifunctional protein PyrR.